We begin with the raw amino-acid sequence, 432 residues long: Neuronal pentraxin-1 (432 aa).

Positions 1 to 22 (MLAGRAARTCALLALCLLGSRA) are cleaved as a signal peptide. The segment at 90–128 (ESQSTLDAGPGEARSGGGRKQPGSGKNTMGDLSRTPASE) is disordered. Residues asparagine 154 and asparagine 193 are each glycosylated (N-linked (GlcNAc...) asparagine). The 203-residue stretch at 226–428 (DKFQLTFPLR…GATKWTFEAC (203 aa)) folds into the Pentraxin (PTX) domain. A disulfide bridge links cysteine 256 with cysteine 316. Ca(2+)-binding residues include asparagine 280, glutamate 358, glutamine 359, aspartate 360, and glutamine 370.

Homooligomer or heterooligomer (probably pentamer) with neuronal pentraxin receptor (NPTXR). Requires Ca(2+) as cofactor. Post-translationally, glycosylated. Cerebellum, hippocampus and cerebral cortex.

It is found in the secreted. The protein localises to the cytoplasmic vesicle. Its subcellular location is the secretory vesicle. The protein resides in the endoplasmic reticulum. In terms of biological role, may be involved in mediating uptake of synaptic material during synapse remodeling or in mediating the synaptic clustering of AMPA glutamate receptors at a subset of excitatory synapses. The polypeptide is Neuronal pentraxin-1 (Nptx1) (Rattus norvegicus (Rat)).